The following is a 531-amino-acid chain: Laccase-4 (531 aa).

An N-terminal signal peptide occupies residues 1-19; it reads MLSSITLLPLLAAVSTPAF. Plastocyanin-like domains are found at residues 23–146, 158–315, and 384–507; these read RNYK…LVIY, VDDA…LHYE, and SLPT…VSSR. A glycan (N-linked (GlcNAc...) asparagine) is linked at N66. Cu cation-binding residues include H83 and H85. A disulfide bond links C104 and C528. N-linked (GlcNAc...) asparagine glycosylation is present at N109. Cu cation-binding residues include H128 and H130. N-linked (GlcNAc...) asparagine glycans are attached at residues N186, N231, N280, and N395. Residues H427, H430, H432, H479, C480, and H481 each coordinate Cu cation.

Belongs to the multicopper oxidase family. As to quaternary structure, homodimer. Requires Cu cation as cofactor. In mycelia, at a higher level than LCC1, LCC2 and LCC3.

The protein resides in the secreted. It carries out the reaction 4 hydroquinone + O2 = 4 benzosemiquinone + 2 H2O. Lignin degradation and detoxification of lignin-derived products. This Thanatephorus cucumeris (Black scurf of potato) protein is Laccase-4 (LCC4).